The primary structure comprises 859 residues: Rod cGMP-specific 3',5'-cyclic phosphodiesterase subunit alpha (859 aa).

Position 2 is an N-acetylglycine (glycine 2). 2 consecutive GAF domains span residues 73–222 (QAEK…NLIM) and 254–431 (DIER…GWSV). The region spanning 483–816 (EEEELAEILQ…KEWKALADEY (334 aa)) is the PDEase domain. The active-site Proton donor is the histidine 559. A divalent metal cation contacts are provided by histidine 563, histidine 599, aspartate 600, and aspartate 720. The segment at 821 to 859 (KGLEEEKQKQQAANQAAAGSQHGGKQPGGGPASKSCCVQ) is disordered. Over residues 830–840 (QQAANQAAAGS) the composition is skewed to low complexity. The span at 841 to 851 (QHGGKQPGGGP) shows a compositional bias: gly residues. Residue cysteine 856 is modified to Cysteine methyl ester. A lipid anchor (S-farnesyl cysteine) is attached at cysteine 856. A propeptide spans 857 to 859 (CVQ) (removed in mature form).

The protein belongs to the cyclic nucleotide phosphodiesterase family. Oligomer composed of two catalytic chains (alpha and beta), an inhibitory chain (gamma) and the delta chain. The cofactor is a divalent metal cation.

The protein localises to the cell membrane. Its subcellular location is the cell projection. It localises to the cilium. The protein resides in the photoreceptor outer segment. It catalyses the reaction 3',5'-cyclic GMP + H2O = GMP + H(+). Rod-specific cGMP phosphodiesterase that catalyzes the hydrolysis of 3',5'-cyclic GMP. This protein participates in processes of transmission and amplification of the visual signal. This Bos taurus (Bovine) protein is Rod cGMP-specific 3',5'-cyclic phosphodiesterase subunit alpha.